Reading from the N-terminus, the 378-residue chain is Chaperone protein DnaJ (378 aa).

Residues 5–70 (DYYEVLGVAK…QKRAAYDQYG (66 aa)) enclose the J domain. The CR-type zinc finger occupies 138 to 216 (GYDTQIRVPS…CHGSGKVKET (79 aa)). Residues cysteine 151, cysteine 154, cysteine 168, cysteine 171, cysteine 190, cysteine 193, cysteine 204, and cysteine 207 each coordinate Zn(2+). CXXCXGXG motif repeat units lie at residues 151–158 (CEVCHGSG), 168–175 (CPTCHGQG), 190–197 (CPKCHGTG), and 204–211 (CAHCHGSG).

It belongs to the DnaJ family. Homodimer. Zn(2+) serves as cofactor.

It localises to the cytoplasm. Its function is as follows. Participates actively in the response to hyperosmotic and heat shock by preventing the aggregation of stress-denatured proteins and by disaggregating proteins, also in an autonomous, DnaK-independent fashion. Unfolded proteins bind initially to DnaJ; upon interaction with the DnaJ-bound protein, DnaK hydrolyzes its bound ATP, resulting in the formation of a stable complex. GrpE releases ADP from DnaK; ATP binding to DnaK triggers the release of the substrate protein, thus completing the reaction cycle. Several rounds of ATP-dependent interactions between DnaJ, DnaK and GrpE are required for fully efficient folding. Also involved, together with DnaK and GrpE, in the DNA replication of plasmids through activation of initiation proteins. This is Chaperone protein DnaJ from Burkholderia cenocepacia (strain HI2424).